Reading from the N-terminus, the 570-residue chain is Vacuolar protein sorting-associated protein 45 (570 aa).

Residues S307 and S441 each carry the phosphoserine modification.

This sequence belongs to the STXBP/unc-18/SEC1 family. Interacts with STX6 and ZFYVE20. In terms of tissue distribution, ubiquitous; expression was highest in testis and in brain. Detected in every part of the brain.

Its subcellular location is the golgi apparatus membrane. It is found in the endosome membrane. Functionally, may play a role in vesicle-mediated protein trafficking from the Golgi stack through the trans-Golgi network. The polypeptide is Vacuolar protein sorting-associated protein 45 (Vps45) (Rattus norvegicus (Rat)).